Consider the following 412-residue polypeptide: Putative gustatory receptor 58c (412 aa).

The next 2 helical transmembrane spans lie at 39–59 and 72–92; these read VVYC…ALFV and MFGV…LFLM. Asparagine 158 is a glycosylation site (N-linked (GlcNAc...) asparagine). Residues 173-193 form a helical membrane-spanning segment; sequence IVYALIMILLMSYVDMTVYMV. Asparagine 203 is a glycosylation site (N-linked (GlcNAc...) asparagine). Helical transmembrane passes span 224-241, 262-282, and 296-316; these read IPRE…RKLW, VLFN…RLWI, and ILYA…FSIF. N-linked (GlcNAc...) asparagine glycosylation is found at asparagine 337, asparagine 386, and asparagine 391.

The protein belongs to the insect chemoreceptor superfamily. Gustatory receptor (GR) family. Gr10a subfamily.

Its subcellular location is the cell membrane. In terms of biological role, probable gustatory receptor which mediates acceptance or avoidance behavior, depending on its substrates. The polypeptide is Putative gustatory receptor 58c (Gr58c) (Drosophila melanogaster (Fruit fly)).